The sequence spans 309 residues: Beta-ketoacyl-[acyl-carrier-protein] synthase III (309 aa).

Active-site residues include Cys-111 and His-236. Residues 237 to 241 (QANVR) are ACP-binding. Asn-266 is a catalytic residue.

This sequence belongs to the thiolase-like superfamily. FabH family. In terms of assembly, homodimer.

The protein localises to the cytoplasm. It carries out the reaction malonyl-[ACP] + acetyl-CoA + H(+) = 3-oxobutanoyl-[ACP] + CO2 + CoA. It functions in the pathway lipid metabolism; fatty acid biosynthesis. Catalyzes the condensation reaction of fatty acid synthesis by the addition to an acyl acceptor of two carbons from malonyl-ACP. Catalyzes the first condensation reaction which initiates fatty acid synthesis and may therefore play a role in governing the total rate of fatty acid production. Possesses both acetoacetyl-ACP synthase and acetyl transacylase activities. Its substrate specificity determines the biosynthesis of branched-chain and/or straight-chain of fatty acids. This is Beta-ketoacyl-[acyl-carrier-protein] synthase III from Aquifex aeolicus (strain VF5).